The sequence spans 1106 residues: Protein translocase subunit SecA (1106 aa).

ATP is bound by residues Gln175, 193–197 (GEGKT), and Asp694. A disordered region spans residues 1021-1106 (QEAPADEQQP…KYKNCHGQNA (86 aa)). Residues 1042–1056 (QRQDMSKYREQKQDL) are compositionally biased toward basic and acidic residues. The segment covering 1057 to 1067 (SDPNQQAAASQ) has biased composition (polar residues). The segment covering 1068-1085 (DTREQQKREPIRAEKTVG) has biased composition (basic and acidic residues). Zn(2+) contacts are provided by Cys1090, Cys1092, Cys1101, and His1102.

Belongs to the SecA family. In terms of assembly, monomer and homodimer. Part of the essential Sec protein translocation apparatus which comprises SecA, SecYEG and auxiliary proteins SecDF. Other proteins may also be involved. The cofactor is Zn(2+).

Its subcellular location is the cell inner membrane. The protein resides in the cytoplasm. The enzyme catalyses ATP + H2O + cellular proteinSide 1 = ADP + phosphate + cellular proteinSide 2.. In terms of biological role, part of the Sec protein translocase complex. Interacts with the SecYEG preprotein conducting channel. Has a central role in coupling the hydrolysis of ATP to the transfer of proteins into and across the cell membrane, serving as an ATP-driven molecular motor driving the stepwise translocation of polypeptide chains across the membrane. In Bacteroides thetaiotaomicron (strain ATCC 29148 / DSM 2079 / JCM 5827 / CCUG 10774 / NCTC 10582 / VPI-5482 / E50), this protein is Protein translocase subunit SecA.